Reading from the N-terminus, the 264-residue chain is Homeobox protein vent1 (264 aa).

2 stretches are compositionally biased toward basic and acidic residues: residues 16 to 26 and 44 to 59; these read KEEATDGKDSM and YAKEMPRKKDGQDVQE. Residues 16 to 140 form a disordered region; it reads KEEATDGKDS…RLRTAFTPQQ (125 aa). A compositionally biased stretch (polar residues) spans 60 to 80; that stretch reads HTTSFQCSLGEQVINRPSANP. The span at 117-130 shows a compositional bias: basic and acidic residues; the sequence is TEQREKSPKSDLQR. A DNA-binding region (homeobox) is located at residues 129–188; it reads QRRLRTAFTPQQISKLEQAFNKQRYLGAPERKKLATSLQLSEIQVKTWFQNRRMKLKRQI.

In terms of tissue distribution, expressed in the ventral marginal zone of gastrulae. At stage 11.5, also expressed in the ventral region of the animal cap (ectoderm). At the end of gastrulation, predominantly localized to the ventral and lateral regions of the closing slit blastopore. At early tail bud stage, expression is maintained only in the forming proctodeum.

The protein localises to the nucleus. In terms of biological role, transcriptional repressor. Cooperates with vent2 in a ventral signaling pathway downstream of bmp4, which antagonizes the Spemann organizer and dorsal mesoderm formation, and leads to ventral mesoderm formation. Acts downstream of bmp4 to repress transcription of foxa4-B/XFD-1'. Binds to DNA with preference for the target sequence 5'-CTATT[T/C]G-3'. Also binds 5'-TGCATTTTG-3' at a lower frequency, and occasionally 5'-TTGATC-3'. Binds to the homeobox 2 (HBX2) repressor element in the promoter of the myf5 gene and represses myf5 transcription in the ventral domain. This chain is Homeobox protein vent1 (vent1), found in Xenopus laevis (African clawed frog).